The sequence spans 129 residues: UPF0102 protein Mnod_0024 (129 aa).

It belongs to the UPF0102 family.

This chain is UPF0102 protein Mnod_0024, found in Methylobacterium nodulans (strain LMG 21967 / CNCM I-2342 / ORS 2060).